A 389-amino-acid polypeptide reads, in one-letter code: Tryptophan synthase beta chain (389 aa).

Residue Lys84 is modified to N6-(pyridoxal phosphate)lysine.

It belongs to the TrpB family. As to quaternary structure, tetramer of two alpha and two beta chains. Requires pyridoxal 5'-phosphate as cofactor.

The enzyme catalyses (1S,2R)-1-C-(indol-3-yl)glycerol 3-phosphate + L-serine = D-glyceraldehyde 3-phosphate + L-tryptophan + H2O. It functions in the pathway amino-acid biosynthesis; L-tryptophan biosynthesis; L-tryptophan from chorismate: step 5/5. In terms of biological role, the beta subunit is responsible for the synthesis of L-tryptophan from indole and L-serine. This chain is Tryptophan synthase beta chain, found in Methanococcus aeolicus (strain ATCC BAA-1280 / DSM 17508 / OCM 812 / Nankai-3).